We begin with the raw amino-acid sequence, 144 residues long: Transcription antitermination protein NusB (144 aa).

Belongs to the NusB family.

Involved in transcription antitermination. Required for transcription of ribosomal RNA (rRNA) genes. Binds specifically to the boxA antiterminator sequence of the ribosomal RNA (rrn) operons. This is Transcription antitermination protein NusB from Carboxydothermus hydrogenoformans (strain ATCC BAA-161 / DSM 6008 / Z-2901).